Consider the following 351-residue polypeptide: Heat shock factor protein HSF30 (351 aa).

The DNA-binding element occupies 29 to 123 (PPPFLSKTYE…LLKTIKRRRN (95 aa)).

The protein belongs to the HSF family. Homotrimer. In terms of processing, exhibits temperature-dependent phosphorylation.

The protein resides in the nucleus. DNA-binding protein that specifically binds heat shock promoter elements (HSE) and activates transcription. This Solanum peruvianum (Peruvian tomato) protein is Heat shock factor protein HSF30 (HSF30).